Reading from the N-terminus, the 311-residue chain is Ribosomal RNA small subunit methyltransferase H (311 aa).

S-adenosyl-L-methionine-binding positions include 33–35 (AGH), aspartate 53, phenylalanine 80, aspartate 101, and glutamine 108.

It belongs to the methyltransferase superfamily. RsmH family.

Its subcellular location is the cytoplasm. The enzyme catalyses cytidine(1402) in 16S rRNA + S-adenosyl-L-methionine = N(4)-methylcytidine(1402) in 16S rRNA + S-adenosyl-L-homocysteine + H(+). Functionally, specifically methylates the N4 position of cytidine in position 1402 (C1402) of 16S rRNA. In Clostridioides difficile (strain 630) (Peptoclostridium difficile), this protein is Ribosomal RNA small subunit methyltransferase H.